The sequence spans 903 residues: Zinc finger CCCH domain-containing protein 27 (903 aa).

The segment at 1–144 is disordered; the sequence is MIKESSSPAL…GRNGAPWAQH (144 aa). Residues 11 to 24 are compositionally biased toward basic and acidic residues; sequence DADKIEVPSPKDEN. The segment covering 33–46 has biased composition (acidic residues); that stretch reads TDNEDFEISDDDDD. Residues 86-96 are compositionally biased toward basic and acidic residues; the sequence is SHGEAQKDFFP. The C3H1-type zinc-finger motif lies at 225 to 253; that stretch reads GMPRQRCRDFEERGFCLRGDMCPMEHGLN. Residues 390 to 456 are disordered; sequence ASKKLGHGKT…GRQSNRASHK (67 aa). Residues 397 to 410 are compositionally biased toward low complexity; it reads GKTANATSTSATGN. Over residues 432-441 the composition is skewed to polar residues; that stretch reads KDSNGQSNSR. The 73-residue stretch at 459–531 folds into the RRM domain; sequence RTLYVNGIPL…RFIKLWWANR (73 aa). 3 disordered regions span residues 545–609, 642–720, and 826–903; these read KSSH…DTKR, KQKG…QTSP, and TNHS…DVSQ. Residues 556-576 show a composition bias toward polar residues; sequence SVPQPSSSNRGKENLQSATPR. The span at 577–587 shows a compositional bias: low complexity; sequence ASSGSSAEASG. Residues 608 to 649 adopt a coiled-coil conformation; sequence KRQESLELLEELRKKQEILAQKRDEFRRQLEKLAKQKGLANS. Residues 693 to 708 are compositionally biased toward low complexity; that stretch reads SGELASSSHKSSATSA. A compositionally biased stretch (polar residues) spans 826–886; it reads TNHSRFQKTS…SMPTATSAKT (61 aa).

The sequence is that of Zinc finger CCCH domain-containing protein 27 from Oryza sativa subsp. japonica (Rice).